The following is a 146-amino-acid chain: Small ribosomal subunit protein uS9z (146 aa).

It belongs to the universal ribosomal protein uS9 family.

This chain is Small ribosomal subunit protein uS9z (RPS16A), found in Arabidopsis thaliana (Mouse-ear cress).